Reading from the N-terminus, the 475-residue chain is Methylenetetrahydrofolate--tRNA-(uracil-5-)-methyltransferase TrmFO (475 aa).

Position 13–18 (13–18 (GAGLAG)) interacts with FAD.

The protein belongs to the MnmG family. TrmFO subfamily. FAD is required as a cofactor.

It localises to the cytoplasm. The catalysed reaction is uridine(54) in tRNA + (6R)-5,10-methylene-5,6,7,8-tetrahydrofolate + NADH + H(+) = 5-methyluridine(54) in tRNA + (6S)-5,6,7,8-tetrahydrofolate + NAD(+). It carries out the reaction uridine(54) in tRNA + (6R)-5,10-methylene-5,6,7,8-tetrahydrofolate + NADPH + H(+) = 5-methyluridine(54) in tRNA + (6S)-5,6,7,8-tetrahydrofolate + NADP(+). Functionally, catalyzes the folate-dependent formation of 5-methyl-uridine at position 54 (M-5-U54) in all tRNAs. This chain is Methylenetetrahydrofolate--tRNA-(uracil-5-)-methyltransferase TrmFO, found in Bradyrhizobium diazoefficiens (strain JCM 10833 / BCRC 13528 / IAM 13628 / NBRC 14792 / USDA 110).